Consider the following 427-residue polypeptide: Serine--tRNA ligase (427 aa).

230-232 (TSE) lines the L-serine pocket. 261 to 263 (RSE) lines the ATP pocket. Glu284 is a binding site for L-serine. 348-351 (EISS) serves as a coordination point for ATP. Ser384 lines the L-serine pocket.

It belongs to the class-II aminoacyl-tRNA synthetase family. Type-1 seryl-tRNA synthetase subfamily. Homodimer. The tRNA molecule binds across the dimer.

The protein resides in the cytoplasm. It catalyses the reaction tRNA(Ser) + L-serine + ATP = L-seryl-tRNA(Ser) + AMP + diphosphate + H(+). The enzyme catalyses tRNA(Sec) + L-serine + ATP = L-seryl-tRNA(Sec) + AMP + diphosphate + H(+). Its pathway is aminoacyl-tRNA biosynthesis; selenocysteinyl-tRNA(Sec) biosynthesis; L-seryl-tRNA(Sec) from L-serine and tRNA(Sec): step 1/1. Its function is as follows. Catalyzes the attachment of serine to tRNA(Ser). Is also able to aminoacylate tRNA(Sec) with serine, to form the misacylated tRNA L-seryl-tRNA(Sec), which will be further converted into selenocysteinyl-tRNA(Sec). This chain is Serine--tRNA ligase, found in Desulforapulum autotrophicum (strain ATCC 43914 / DSM 3382 / VKM B-1955 / HRM2) (Desulfobacterium autotrophicum).